The primary structure comprises 520 residues: 2-isopropylmalate synthase (520 aa).

Positions Val-5–Tyr-267 constitute a Pyruvate carboxyltransferase domain. Mn(2+)-binding residues include Asp-14, His-202, His-204, and Asn-238. A regulatory domain region spans residues His-392–Val-520.

It belongs to the alpha-IPM synthase/homocitrate synthase family. LeuA type 1 subfamily. In terms of assembly, homodimer. Mn(2+) is required as a cofactor.

It localises to the cytoplasm. It carries out the reaction 3-methyl-2-oxobutanoate + acetyl-CoA + H2O = (2S)-2-isopropylmalate + CoA + H(+). It participates in amino-acid biosynthesis; L-leucine biosynthesis; L-leucine from 3-methyl-2-oxobutanoate: step 1/4. Functionally, catalyzes the condensation of the acetyl group of acetyl-CoA with 3-methyl-2-oxobutanoate (2-ketoisovalerate) to form 3-carboxy-3-hydroxy-4-methylpentanoate (2-isopropylmalate). The protein is 2-isopropylmalate synthase of Photorhabdus laumondii subsp. laumondii (strain DSM 15139 / CIP 105565 / TT01) (Photorhabdus luminescens subsp. laumondii).